Here is a 318-residue protein sequence, read N- to C-terminus: Deoxyribose-phosphate aldolase (318 aa).

D155 serves as the catalytic Proton donor/acceptor. K218 (schiff-base intermediate with acetaldehyde) is an active-site residue. The Proton donor/acceptor role is filled by K254.

This sequence belongs to the DeoC/FbaB aldolase family. DeoC type 2 subfamily. In terms of assembly, interacts with YBX1.

The protein localises to the cytoplasm. The protein resides in the cytoplasmic granule. Its subcellular location is the nucleus. It catalyses the reaction 2-deoxy-D-ribose 5-phosphate = D-glyceraldehyde 3-phosphate + acetaldehyde. It participates in carbohydrate degradation; 2-deoxy-D-ribose 1-phosphate degradation; D-glyceraldehyde 3-phosphate and acetaldehyde from 2-deoxy-alpha-D-ribose 1-phosphate: step 2/2. Functionally, catalyzes a reversible aldol reaction between acetaldehyde and D-glyceraldehyde 3-phosphate to generate 2-deoxy-D-ribose 5-phosphate. Participates in stress granule (SG) assembly. May allow ATP production from extracellular deoxyinosine in conditions of energy deprivation. The chain is Deoxyribose-phosphate aldolase (Dera) from Mus musculus (Mouse).